Reading from the N-terminus, the 188-residue chain is Elongation factor P (188 aa).

Lys34 is modified (N6-(3,6-diaminohexanoyl)-5-hydroxylysine).

Belongs to the elongation factor P family. May be beta-lysylated on the epsilon-amino group of Lys-34 by the combined action of EpmA and EpmB, and then hydroxylated on the C5 position of the same residue by EpmC (if this protein is present). Lysylation is critical for the stimulatory effect of EF-P on peptide-bond formation. The lysylation moiety may extend toward the peptidyltransferase center and stabilize the terminal 3-CCA end of the tRNA. Hydroxylation of the C5 position on Lys-34 may allow additional potential stabilizing hydrogen-bond interactions with the P-tRNA.

The protein localises to the cytoplasm. It functions in the pathway protein biosynthesis; polypeptide chain elongation. Functionally, involved in peptide bond synthesis. Alleviates ribosome stalling that occurs when 3 or more consecutive Pro residues or the sequence PPG is present in a protein, possibly by augmenting the peptidyl transferase activity of the ribosome. Modification of Lys-34 is required for alleviation. The protein is Elongation factor P of Stenotrophomonas maltophilia (strain K279a).